Reading from the N-terminus, the 205-residue chain is Large ribosomal subunit protein bL25 (205 aa).

Belongs to the bacterial ribosomal protein bL25 family. CTC subfamily. In terms of assembly, part of the 50S ribosomal subunit; part of the 5S rRNA/L5/L18/L25 subcomplex. Contacts the 5S rRNA. Binds to the 5S rRNA independently of L5 and L18.

Functionally, this is one of the proteins that binds to the 5S RNA in the ribosome where it forms part of the central protuberance. This Bartonella bacilliformis (strain ATCC 35685 / KC583 / Herrer 020/F12,63) protein is Large ribosomal subunit protein bL25.